The primary structure comprises 172 residues: Adenine phosphoribosyltransferase (172 aa).

This sequence belongs to the purine/pyrimidine phosphoribosyltransferase family. In terms of assembly, homodimer.

It localises to the cytoplasm. It carries out the reaction AMP + diphosphate = 5-phospho-alpha-D-ribose 1-diphosphate + adenine. It functions in the pathway purine metabolism; AMP biosynthesis via salvage pathway; AMP from adenine: step 1/1. Functionally, catalyzes a salvage reaction resulting in the formation of AMP, that is energically less costly than de novo synthesis. The sequence is that of Adenine phosphoribosyltransferase from Streptococcus mutans serotype c (strain ATCC 700610 / UA159).